The chain runs to 961 residues: Lon protease homolog, mitochondrial (961 aa).

The transit peptide at 1–67 (MAGGTGCVRL…SPAAAGHWRG (67 aa)) directs the protein to the mitochondrion. 2 disordered regions span residues 76 to 103 (GGGA…GSAG) and 220 to 262 (QLEV…VVVG). The 247-residue stretch at 125–371 (LPLIAVTRNP…KALSLLKKEF (247 aa)) folds into the Lon N-terminal domain. Positions 235 to 244 (KLRKKPKRGK) are enriched in basic residues. The span at 245 to 257 (KEAEEDGATKRPL) shows a compositional bias: basic and acidic residues. Position 524 to 531 (524 to 531 (GPPGVGKT)) interacts with ATP. Positions 760 to 951 (VTPPGVVMGL…REIFDIAFPE (192 aa)) constitute a Lon proteolytic domain. The span at 784 to 801 (SLRRPRDRDSDKGDKDGS) shows a compositional bias: basic and acidic residues. The interval 784 to 803 (SLRRPRDRDSDKGDKDGSLE) is disordered. Active-site residues include Ser-857 and Lys-900.

It belongs to the peptidase S16 family. As to quaternary structure, homohexamer. Organized in a ring with a central cavity. The ATP-binding and proteolytic domains (AP-domain) form a hexameric chamber, while the N-terminal domain is arranged as a trimer of dimers. DNA and RNA binding is stimulated by substrate and inhibited by ATP binding. Interacts with TWNK and mitochondrial DNA polymerase subunit POLG.

Its subcellular location is the mitochondrion matrix. The catalysed reaction is Hydrolysis of proteins in presence of ATP.. Its function is as follows. ATP-dependent serine protease that mediates the selective degradation of misfolded, unassembled or oxidatively damaged polypeptides as well as certain short-lived regulatory proteins in the mitochondrial matrix. Endogenous substrates include mitochondrial steroidogenic acute regulatory (StAR) protein, DELE1, helicase Twinkle (TWNK) and the large ribosomal subunit protein MRPL32/bL32m. MRPL32/bL32m is protected from degradation by LONP1 when it is bound to a nucleic acid (RNA), but TWNK is not. May also have a chaperone function in the assembly of inner membrane protein complexes. Participates in the regulation of mitochondrial gene expression and in the maintenance of the integrity of the mitochondrial genome. Binds to mitochondrial promoters and RNA in a single-stranded, site-specific, and strand-specific manner. May regulate mitochondrial DNA replication and/or gene expression using site-specific, single-stranded DNA binding to target the degradation of regulatory proteins binding to adjacent sites in mitochondrial promoters. This chain is Lon protease homolog, mitochondrial, found in Bos taurus (Bovine).